The primary structure comprises 446 residues: Anthranilate N-benzoyltransferase protein 2 (446 aa).

Active-site proton acceptor residues include His-164 and Asp-393.

Belongs to the plant acyltransferase family. N-terminus is blocked.

The catalysed reaction is anthranilate + benzoyl-CoA = N-benzoylanthranilate + CoA. The protein operates within phytoalexin biosynthesis; methoxydianthramide B biosynthesis. Catalyzes the formation of N-benzoylanthranilate, in the course of methoxydianthramide B, a phytoalexin. Phytoalexins are produced in response to infection by parasites, and are essential for the expression of disease resistance. The sequence is that of Anthranilate N-benzoyltransferase protein 2 (HCBT2) from Dianthus caryophyllus (Carnation).